The chain runs to 183 residues: Shikimate kinase (183 aa).

ATP is bound at residue 25 to 30 (GAGKTT). Threonine 29 is a Mg(2+) binding site. Positions 47, 71, and 93 each coordinate substrate. Arginine 131 is an ATP binding site. Residue arginine 150 participates in substrate binding.

This sequence belongs to the shikimate kinase family. Monomer. Requires Mg(2+) as cofactor.

Its subcellular location is the cytoplasm. It catalyses the reaction shikimate + ATP = 3-phosphoshikimate + ADP + H(+). Its pathway is metabolic intermediate biosynthesis; chorismate biosynthesis; chorismate from D-erythrose 4-phosphate and phosphoenolpyruvate: step 5/7. In terms of biological role, catalyzes the specific phosphorylation of the 3-hydroxyl group of shikimic acid using ATP as a cosubstrate. This Dechloromonas aromatica (strain RCB) protein is Shikimate kinase.